Here is a 177-residue protein sequence, read N- to C-terminus: Interleukin-1 receptor antagonist protein (177 aa).

The N-terminal stretch at 1-25 (MEIRRRSVRHLISLLLFLFYSETAC) is a signal peptide. Cysteines 91 and 141 form a disulfide. An N-linked (GlcNAc...) asparagine glycan is attached at Asn109.

Belongs to the IL-1 family.

It is found in the secreted. In terms of biological role, anti-inflammatory antagonist of interleukin-1 family of proinflammatory cytokines such as interleukin-1beta/IL1B and interleukin-1alpha/IL1A. Protects from immune dysregulation and uncontrolled systemic inflammation triggered by IL1 for a range of innate stimulatory agents such as pathogens. This Equus caballus (Horse) protein is Interleukin-1 receptor antagonist protein (IL1RN).